The sequence spans 86 residues: Antitoxin VapB33 (86 aa).

Its function is as follows. Antitoxin component of a type II toxin-antitoxin (TA) system. Upon expression in M.smegmatis neutralizes the effect of cognate toxin VapC33. The protein is Antitoxin VapB33 (vapB33) of Mycobacterium tuberculosis (strain ATCC 25618 / H37Rv).